Consider the following 274-residue polypeptide: Large ribosomal subunit protein uL2 (274 aa).

The segment at 224 to 259 is disordered; it reads AMNPVDHPHGGGEGRTSGGRHPVTPWGIPTKGYKTR.

It belongs to the universal ribosomal protein uL2 family. In terms of assembly, part of the 50S ribosomal subunit. Forms a bridge to the 30S subunit in the 70S ribosome.

In terms of biological role, one of the primary rRNA binding proteins. Required for association of the 30S and 50S subunits to form the 70S ribosome, for tRNA binding and peptide bond formation. It has been suggested to have peptidyltransferase activity; this is somewhat controversial. Makes several contacts with the 16S rRNA in the 70S ribosome. The sequence is that of Large ribosomal subunit protein uL2 from Citrifermentans bemidjiense (strain ATCC BAA-1014 / DSM 16622 / JCM 12645 / Bem) (Geobacter bemidjiensis).